We begin with the raw amino-acid sequence, 73 residues long: Putative defensin-like protein 57 (73 aa).

The first 25 residues, 1–25 (MRFTSMIFVLVVILINSLFNFNVLA), serve as a signal peptide directing secretion. 4 disulfide bridges follow: cysteine 37/cysteine 71, cysteine 41/cysteine 64, cysteine 50/cysteine 69, and cysteine 54/cysteine 70.

Belongs to the DEFL family.

It is found in the secreted. The polypeptide is Putative defensin-like protein 57 (Arabidopsis thaliana (Mouse-ear cress)).